The following is a 133-amino-acid chain: MAPNDTISDMLTRIRNACAVRHPTTQVPTTKMTRSIAQVLKEEGFIEGFEETGEGVQKYLVLTLKYKDKNRQPIINMLKRVSKPGLRVYSNCKDLPRVLGGIGIAIVSTSKGIMTDREARRQNVGGEILCYIW.

It belongs to the universal ribosomal protein uS8 family. Part of the 30S ribosomal subunit. Contacts proteins S5 and S12.

In terms of biological role, one of the primary rRNA binding proteins, it binds directly to 16S rRNA central domain where it helps coordinate assembly of the platform of the 30S subunit. This Rippkaea orientalis (strain PCC 8801 / RF-1) (Cyanothece sp. (strain PCC 8801)) protein is Small ribosomal subunit protein uS8.